A 248-amino-acid polypeptide reads, in one-letter code: Probable transcriptional regulatory protein RPA1097 (248 aa).

The disordered stretch occupies residues 1 to 21; sequence MAGHSQFKNIMHRKGRQDAQR.

This sequence belongs to the TACO1 family.

It is found in the cytoplasm. The chain is Probable transcriptional regulatory protein RPA1097 from Rhodopseudomonas palustris (strain ATCC BAA-98 / CGA009).